The chain runs to 727 residues: MAAEGLAGLLPAQTQLEYALLDADTPQEKENLVYQYLKKMDSRERDLTVPELSRDLQWLNTEGPISLHKDLCGKVVVLDFFTYCCINCLHLLPDLHELEHQYSDKDGLVIIGVHSAKFPNEKVLDSIKSAVLRYNIVHPVVNDADATLWHELEVSCWPTLVILGPRGNMLFSLVGEGHKEKLFLFTSITLKFYKERGQIKDNSIGIKLYKDSLPPSPLLFPGKVTVDKSGERLVIADTGHHRILVTLKNGQILHTIGGPNSGRKDGRFSEAAFNSPQGVAIKNNVIYVADTENHLIRKIDLELEIVTTVAGIGIQGVDKEGGAKGEEQPISSPWDVVFGNSVSGTQEDDVLWIAMAGIHQVWALMLEGGKLPKGSDLKKGVCLRFAGSGNEENRNNAYPHKAGFAQPSGLSLASEEPWNCLFVADSESSTVRMISLKDGAVKHLVGGERDPLNLFAFGDVDGAGINAKLQHPLGITWDKKRKLLYVADSYNHKIKVVDPKMKNCATLAGTGEASNVVGSSFTQSTFNEPGGLCIEENGRLVYVADTNNHQIKVLDLETKILSMLPILNPETCDVTDNLSVQKDQIANLPKLPKSAPNIQLPSLSAAPGQTIQFLLKLTLPPDSKLNEEAPNAWFITAEDNNTWLLQGQCLSGEIKDVSCQTVIPFQLPRVCLSAEAVLAIKACLYYCSKDSSACMMKGISFNQPLQIGSTNQGRLTQVELTHSFITN.

In terms of domain architecture, Thioredoxin spans 43 to 198 (RERDLTVPEL…TLKFYKERGQ (156 aa)). NHL repeat units follow at residues 207 to 249 (KLYK…TLKN), 260 to 302 (NSGR…IDLE), 330 to 364 (ISSP…VWAL), 404 to 434 (FAQP…VRMI), 456 to 500 (AFGD…VDPK), and 513 to 557 (ASNV…LDLE).

In terms of assembly, monomer.

It is found in the cytoplasm. Its subcellular location is the cytosol. Required for normal embryonic development. The protein is NHL repeat-containing protein 2 (NHLRC2) of Gallus gallus (Chicken).